We begin with the raw amino-acid sequence, 38 residues long: Photosystem II reaction center protein L (38 aa).

Residues 17 to 37 (SLFWGLLLIFVLAVLFSSYFF) traverse the membrane as a helical segment.

The protein belongs to the PsbL family. In terms of assembly, PSII is composed of 1 copy each of membrane proteins PsbA, PsbB, PsbC, PsbD, PsbE, PsbF, PsbH, PsbI, PsbJ, PsbK, PsbL, PsbM, PsbT, PsbX, PsbY, PsbZ, Psb30/Ycf12, at least 3 peripheral proteins of the oxygen-evolving complex and a large number of cofactors. It forms dimeric complexes.

The protein localises to the plastid. The protein resides in the chloroplast thylakoid membrane. One of the components of the core complex of photosystem II (PSII). PSII is a light-driven water:plastoquinone oxidoreductase that uses light energy to abstract electrons from H(2)O, generating O(2) and a proton gradient subsequently used for ATP formation. It consists of a core antenna complex that captures photons, and an electron transfer chain that converts photonic excitation into a charge separation. This subunit is found at the monomer-monomer interface and is required for correct PSII assembly and/or dimerization. The protein is Photosystem II reaction center protein L of Gracilaria tenuistipitata var. liui (Red alga).